We begin with the raw amino-acid sequence, 201 residues long: Ribonuclease HII (201 aa).

The region spanning 10-200 (LIEAGCDEAG…LGTDPQLEIP (191 aa)) is the RNase H type-2 domain. Residues Asp-16, Glu-17, and Asp-108 each coordinate a divalent metal cation.

The protein belongs to the RNase HII family. Requires Mn(2+) as cofactor. Mg(2+) is required as a cofactor.

Its subcellular location is the cytoplasm. It catalyses the reaction Endonucleolytic cleavage to 5'-phosphomonoester.. In terms of biological role, endonuclease that specifically degrades the RNA of RNA-DNA hybrids. The chain is Ribonuclease HII from Phocaeicola vulgatus (strain ATCC 8482 / DSM 1447 / JCM 5826 / CCUG 4940 / NBRC 14291 / NCTC 11154) (Bacteroides vulgatus).